Here is a 475-residue protein sequence, read N- to C-terminus: Ribulose bisphosphate carboxylase large chain (475 aa).

Residues N123 and T173 each contribute to the substrate site. Residue K175 is the Proton acceptor of the active site. K177 contacts substrate. The Mg(2+) site is built by K201, D203, and E204. N6-carboxylysine is present on K201. Residue H294 is the Proton acceptor of the active site. Substrate is bound by residues R295, H327, and S379.

Belongs to the RuBisCO large chain family. Type I subfamily. Heterohexadecamer of 8 large chains and 8 small chains; disulfide-linked. The disulfide link is formed within the large subunit homodimers. The cofactor is Mg(2+). Post-translationally, the disulfide bond which can form in the large chain dimeric partners within the hexadecamer appears to be associated with oxidative stress and protein turnover.

It is found in the plastid. The protein resides in the chloroplast. It carries out the reaction 2 (2R)-3-phosphoglycerate + 2 H(+) = D-ribulose 1,5-bisphosphate + CO2 + H2O. It catalyses the reaction D-ribulose 1,5-bisphosphate + O2 = 2-phosphoglycolate + (2R)-3-phosphoglycerate + 2 H(+). Functionally, ruBisCO catalyzes two reactions: the carboxylation of D-ribulose 1,5-bisphosphate, the primary event in carbon dioxide fixation, as well as the oxidative fragmentation of the pentose substrate in the photorespiration process. Both reactions occur simultaneously and in competition at the same active site. This Euglena gracilis protein is Ribulose bisphosphate carboxylase large chain.